The sequence spans 434 residues: UDP-glucose 6-dehydrogenase (434 aa).

Residues 2 to 19 (NITFIGSGYVGLVSGIIM), valine 11, aspartate 30, lysine 35, threonine 121, and glutamate 152 contribute to the NAD(+) site. Substrate-binding positions include 148–152 (EFLRE), lysine 204, asparagine 208, 249–253 (FLNAG), and glycine 257. Catalysis depends on cysteine 260, which acts as the Nucleophile. NAD(+) is bound at residue lysine 263. Lysine 321 contributes to the substrate binding site. Arginine 328 provides a ligand contact to NAD(+).

This sequence belongs to the UDP-glucose/GDP-mannose dehydrogenase family.

The catalysed reaction is UDP-alpha-D-glucose + 2 NAD(+) + H2O = UDP-alpha-D-glucuronate + 2 NADH + 3 H(+). It participates in nucleotide-sugar biosynthesis; UDP-alpha-D-glucuronate biosynthesis; UDP-alpha-D-glucuronate from UDP-alpha-D-glucose: step 1/1. In Rickettsia prowazekii (strain Madrid E), this protein is UDP-glucose 6-dehydrogenase (udg).